Consider the following 149-residue polypeptide: uncharacterized protein (149 aa).

The region spanning 1-149 is the N-acetyltransferase domain; the sequence is MNIRQAKTSD…VHYCLNVPAK (149 aa).

The protein belongs to the acetyltransferase family.

This is an uncharacterized protein from Bacillus subtilis (strain 168).